Reading from the N-terminus, the 347-residue chain is Endophilin-A3 (347 aa).

Residues Met1–Ile21 form a membrane-binding amphipathic helix region. A BAR domain is found at Ser18–Lys249. Residues Pro60–Pro87 are required for dimerization upon membrane association. A coiled-coil region spans residues Glu180–Met201. An interaction with ARC region spans residues Phe218 to Glu254. Residues Phe255–Pro288 form a disordered region. Over residues Asn261–Thr281 the composition is skewed to polar residues. The SH3 domain maps to Ala285–Pro344.

Belongs to the endophilin family. In terms of assembly, interacts with ARC, DNM1, SGIP1, SYNJ1 and DYDC1. Interacts with FASLG. Interacts with ATXN2. Interacts with BIN2.

The protein resides in the cytoplasm. Its subcellular location is the early endosome membrane. In terms of biological role, implicated in endocytosis. May recruit other proteins to membranes with high curvature. The protein is Endophilin-A3 (Sh3gl3) of Mus musculus (Mouse).